Here is a 745-residue protein sequence, read N- to C-terminus: Elongation factor G, mitochondrial (745 aa).

A tr-type G domain is found at 40-317 (ERIRNIGISA…AVLDYLPNPG (278 aa)). GTP is bound by residues 49-56 (AHIDSGKT), 116-120 (DTPGH), and 170-173 (NKLD).

It belongs to the TRAFAC class translation factor GTPase superfamily. Classic translation factor GTPase family. EF-G/EF-2 subfamily.

The protein localises to the mitochondrion. It participates in protein biosynthesis; polypeptide chain elongation. Functionally, mitochondrial GTPase that catalyzes the GTP-dependent ribosomal translocation step during translation elongation. During this step, the ribosome changes from the pre-translocational (PRE) to the post-translocational (POST) state as the newly formed A-site-bound peptidyl-tRNA and P-site-bound deacylated tRNA move to the P and E sites, respectively. Catalyzes the coordinated movement of the two tRNA molecules, the mRNA and conformational changes in the ribosome. Essential during development as it acts as a retrograde signal from mitochondria to the nucleus to slow down cell proliferation if mitochondrial energy output is low. This Drosophila erecta (Fruit fly) protein is Elongation factor G, mitochondrial.